We begin with the raw amino-acid sequence, 364 residues long: 3-isopropylmalate dehydrogenase (364 aa).

Residue 79–92 (GPKWNNINETSRPE) participates in NAD(+) binding. The substrate site is built by Arg-100, Arg-110, Arg-139, and Asp-228. Mg(2+) contacts are provided by Asp-228, Asp-252, and Asp-256. 286–298 (GSAPDIAGKNIAN) provides a ligand contact to NAD(+).

This sequence belongs to the isocitrate and isopropylmalate dehydrogenases family. LeuB type 1 subfamily. In terms of assembly, homodimer. Mg(2+) is required as a cofactor. It depends on Mn(2+) as a cofactor.

The protein localises to the cytoplasm. The catalysed reaction is (2R,3S)-3-isopropylmalate + NAD(+) = 4-methyl-2-oxopentanoate + CO2 + NADH. It functions in the pathway amino-acid biosynthesis; L-leucine biosynthesis; L-leucine from 3-methyl-2-oxobutanoate: step 3/4. Catalyzes the oxidation of 3-carboxy-2-hydroxy-4-methylpentanoate (3-isopropylmalate) to 3-carboxy-4-methyl-2-oxopentanoate. The product decarboxylates to 4-methyl-2 oxopentanoate. The chain is 3-isopropylmalate dehydrogenase from Blochmanniella floridana.